The sequence spans 276 residues: Diaminopimelate epimerase (276 aa).

N13, Q46, and N66 together coordinate substrate. C75 acts as the Proton donor in catalysis. Substrate-binding positions include 76-77 (GN), N159, N192, and 210-211 (ER). The active-site Proton acceptor is the C219. Residue 220–221 (GT) participates in substrate binding.

The protein belongs to the diaminopimelate epimerase family. In terms of assembly, homodimer.

The protein resides in the cytoplasm. It carries out the reaction (2S,6S)-2,6-diaminopimelate = meso-2,6-diaminopimelate. The protein operates within amino-acid biosynthesis; L-lysine biosynthesis via DAP pathway; DL-2,6-diaminopimelate from LL-2,6-diaminopimelate: step 1/1. Catalyzes the stereoinversion of LL-2,6-diaminopimelate (L,L-DAP) to meso-diaminopimelate (meso-DAP), a precursor of L-lysine and an essential component of the bacterial peptidoglycan. This is Diaminopimelate epimerase from Aeromonas salmonicida (strain A449).